We begin with the raw amino-acid sequence, 211 residues long: Ribonuclease HII (211 aa).

Residues 24 to 211 (QLIAGVDEVG…KPVKKALGLD (188 aa)) enclose the RNase H type-2 domain. A divalent metal cation is bound by residues D30, E31, and D122.

It belongs to the RNase HII family. Mn(2+) serves as cofactor. Mg(2+) is required as a cofactor.

The protein localises to the cytoplasm. The catalysed reaction is Endonucleolytic cleavage to 5'-phosphomonoester.. Endonuclease that specifically degrades the RNA of RNA-DNA hybrids. This chain is Ribonuclease HII, found in Vibrio parahaemolyticus serotype O3:K6 (strain RIMD 2210633).